A 288-amino-acid chain; its full sequence is Bifunctional protein FolD (288 aa).

NADP(+) is bound by residues 166-168, S191, and I232; that span reads GRS.

This sequence belongs to the tetrahydrofolate dehydrogenase/cyclohydrolase family. Homodimer.

The catalysed reaction is (6R)-5,10-methylene-5,6,7,8-tetrahydrofolate + NADP(+) = (6R)-5,10-methenyltetrahydrofolate + NADPH. The enzyme catalyses (6R)-5,10-methenyltetrahydrofolate + H2O = (6R)-10-formyltetrahydrofolate + H(+). It participates in one-carbon metabolism; tetrahydrofolate interconversion. Its function is as follows. Catalyzes the oxidation of 5,10-methylenetetrahydrofolate to 5,10-methenyltetrahydrofolate and then the hydrolysis of 5,10-methenyltetrahydrofolate to 10-formyltetrahydrofolate. The chain is Bifunctional protein FolD from Rickettsia africae (strain ESF-5).